We begin with the raw amino-acid sequence, 352 residues long: MNFIHDYRSPRVIFGPDSLARLPQELERLGIDRALVLTTPEQAPLGRQVAEPVIGHVAAFYDGATMHVPALVAEEACKIARTSEANGVIAIGGGSTIGLAKIVALRTELPIVAVPTTYAGSEMTSIFGITEGGVKKTGRDARVMPRAVIYEPRLTLELPLSISVTSAINAIAHAVEGLYAPDATPLLTIMAQEGIAATVRAISRMYQSPRDLQARGDALYGAWLCASVVGNVSMALHHKLCHTLGGTLDLPHAQTHTVVLPHALAYNARAVPDAMRVLRIALGHDDPPTALYELARDNGAPVALRDLGMREEDIEHVGDLALQDRYPNPRELDRDALLALLRDAYHGRPPSA.

This sequence belongs to the iron-containing alcohol dehydrogenase family.

The catalysed reaction is 3-oxoadipate + NAD(+) = maleylacetate + NADH + H(+). It carries out the reaction 3-oxoadipate + NADP(+) = maleylacetate + NADPH + H(+). It functions in the pathway aromatic compound metabolism; 3-chlorocatechol degradation. The polypeptide is Maleylacetate reductase (clcE) (Pseudomonas aeruginosa).